The chain runs to 440 residues: L-seryl-tRNA(Sec) selenium transferase (440 aa).

N6-(pyridoxal phosphate)lysine is present on Lys-282.

Belongs to the SelA family. It depends on pyridoxal 5'-phosphate as a cofactor.

It localises to the cytoplasm. The catalysed reaction is L-seryl-tRNA(Sec) + selenophosphate + H(+) = L-selenocysteinyl-tRNA(Sec) + phosphate. Its pathway is aminoacyl-tRNA biosynthesis; selenocysteinyl-tRNA(Sec) biosynthesis; selenocysteinyl-tRNA(Sec) from L-seryl-tRNA(Sec) (bacterial route): step 1/1. Functionally, converts seryl-tRNA(Sec) to selenocysteinyl-tRNA(Sec) required for selenoprotein biosynthesis. The chain is L-seryl-tRNA(Sec) selenium transferase from Campylobacter jejuni subsp. doylei (strain ATCC BAA-1458 / RM4099 / 269.97).